Reading from the N-terminus, the 181-residue chain is Probable calcium-binding protein CML43 (181 aa).

3 EF-hand domains span residues 24-59 (LNAL…LGLD), 107-142 (SPES…LGLP), and 145-180 (GEIE…VVVP). Aspartate 37, asparagine 39, aspartate 41, glutamate 48, aspartate 120, aspartate 122, aspartate 124, glutamate 131, aspartate 158, asparagine 160, aspartate 162, arginine 164, and glutamate 169 together coordinate Ca(2+).

Expressed specifically in roots.

Its function is as follows. Calcium-binding protein that may mediate calcium-dependent signal during plant defense response. The protein is Probable calcium-binding protein CML43 (CML43) of Arabidopsis thaliana (Mouse-ear cress).